The primary structure comprises 344 residues: GPALPP motifs-containing protein 1 (344 aa).

Residues 1 to 309 form a disordered region; that stretch reads MARDLIGPAL…QERIPFDRDK (309 aa). Ala-2 is subject to N-acetylalanine. The GPALPP motif 1 signature appears at 7 to 12; that stretch reads GPALPP. Position 28 is a phosphoserine (Ser-28). A GPALPP motif 2 motif is present at residues 30–35; sequence GPALPP. Acidic residues-rich tracts occupy residues 58-67 and 80-93; these read GNQESEEDDT and DDND…DDDG. Positions 96–101 match the GPALPP motif 3 motif; the sequence is GPALPP. Ser-109 carries the phosphoserine modification. Residues 111-120 show a composition bias toward pro residues; sequence PRPIIGPALP. The GPALPP motif 4 motif lies at 116–121; sequence GPALPP. Over residues 128–137 the composition is skewed to basic and acidic residues; sequence QKSDKGRDDP. Residue Thr-142 is modified to Phosphothreonine. Phosphoserine occurs at positions 144 and 145. 4 stretches are compositionally biased toward basic and acidic residues: residues 167–191, 231–265, 273–283, and 291–309; these read EFEK…KPIV, PADR…KRLA, ESKRSESLMDI, and KAAE…DRDK. Lys-275 is covalently cross-linked (Glycyl lysine isopeptide (Lys-Gly) (interchain with G-Cter in SUMO2)). Residue Lys-312 forms a Glycyl lysine isopeptide (Lys-Gly) (interchain with G-Cter in SUMO2) linkage.

The polypeptide is GPALPP motifs-containing protein 1 (GPALPP1) (Pongo abelii (Sumatran orangutan)).